A 72-amino-acid chain; its full sequence is Translation initiation factor IF-1 (72 aa).

Positions 1-72 constitute an S1-like domain; the sequence is MAKEDVIEVE…NRGRIVYRYK (72 aa).

The protein belongs to the IF-1 family. As to quaternary structure, component of the 30S ribosomal translation pre-initiation complex which assembles on the 30S ribosome in the order IF-2 and IF-3, IF-1 and N-formylmethionyl-tRNA(fMet); mRNA recruitment can occur at any time during PIC assembly.

Its subcellular location is the cytoplasm. One of the essential components for the initiation of protein synthesis. Stabilizes the binding of IF-2 and IF-3 on the 30S subunit to which N-formylmethionyl-tRNA(fMet) subsequently binds. Helps modulate mRNA selection, yielding the 30S pre-initiation complex (PIC). Upon addition of the 50S ribosomal subunit IF-1, IF-2 and IF-3 are released leaving the mature 70S translation initiation complex. The protein is Translation initiation factor IF-1 of Moorella thermoacetica (strain ATCC 39073 / JCM 9320).